The sequence spans 501 residues: Cyclin-dependent kinase 19 (501 aa).

Methionine 1 is subject to N-acetylmethionine. A Protein kinase domain is found at 21-335 (EYEGCKVGRG…SEQALQDPYF (315 aa)). ATP contacts are provided by residues 27–35 (VGRGTYGHV) and lysine 52. Aspartate 151 functions as the Proton acceptor in the catalytic mechanism. A disordered region spans residues 362-501 (DEPEEKGDKN…YHSSHQTHRY (140 aa)). A compositionally biased stretch (low complexity) spans 371–392 (NQPQQQNPHQQPAAPAQQTAAP). Positions 408-421 (TAGGATAGGGGAGA) are enriched in gly residues. Serine 449 bears the Phosphoserine mark. The span at 467-495 (YQSSVQGSSQSQSTLGYSSSQQSTQYHSS) shows a compositional bias: low complexity.

The protein belongs to the protein kinase superfamily. CMGC Ser/Thr protein kinase family. CDC2/CDKX subfamily.

The protein resides in the cytoplasm. It is found in the perinuclear region. The protein localises to the nucleus. It catalyses the reaction L-seryl-[protein] + ATP = O-phospho-L-seryl-[protein] + ADP + H(+). The catalysed reaction is L-threonyl-[protein] + ATP = O-phospho-L-threonyl-[protein] + ADP + H(+). The polypeptide is Cyclin-dependent kinase 19 (Cdk19) (Mus musculus (Mouse)).